We begin with the raw amino-acid sequence, 421 residues long: MLDLKFVRTNPEVVKEALKKRNSNVSLDAFLEQEEERRKLLFEVESLKAQRNTVSEEVGRRKKHGEDAEQLILEMREVGQKVKNLEDKLGEIEQSMEAVLYEIPNIPHESVPVGADEEANVEVRTWGTPRSFDFEPLAHYEIGEKLDILDFARAGKVTGARFTFYKGLGAKLERALISFMLDRHSAKGYVEVLPPYMVHRNSMIGTGQLPKFEEDAFKVAGTDYFLIPTAEVPVTNMYREEILEAEQLPIHHCAYSACFRAEAGSAGRDTRGLIRQHQFNKVELVKFAFPENSYEELESLTRDAESILQELELPYRVMALSTGDLGFTSAKTYDLEVWLPSFNTYREISSCSNFEDFQARRANIRFRRAPKAKPEFLHTLNGSGLAIGRTVSAILENYQEADGRVRVPKALQPYMGVEYIG.

229–231 is an L-serine binding site; the sequence is TAE. 260–262 contributes to the ATP binding site; that stretch reads RAE. Glu283 contacts L-serine. Position 347–350 (347–350) interacts with ATP; the sequence is EISS. Ser383 contacts L-serine.

It belongs to the class-II aminoacyl-tRNA synthetase family. Type-1 seryl-tRNA synthetase subfamily. As to quaternary structure, homodimer. The tRNA molecule binds across the dimer.

The protein localises to the cytoplasm. The enzyme catalyses tRNA(Ser) + L-serine + ATP = L-seryl-tRNA(Ser) + AMP + diphosphate + H(+). It catalyses the reaction tRNA(Sec) + L-serine + ATP = L-seryl-tRNA(Sec) + AMP + diphosphate + H(+). Its pathway is aminoacyl-tRNA biosynthesis; selenocysteinyl-tRNA(Sec) biosynthesis; L-seryl-tRNA(Sec) from L-serine and tRNA(Sec): step 1/1. Its function is as follows. Catalyzes the attachment of serine to tRNA(Ser). Is also able to aminoacylate tRNA(Sec) with serine, to form the misacylated tRNA L-seryl-tRNA(Sec), which will be further converted into selenocysteinyl-tRNA(Sec). The sequence is that of Serine--tRNA ligase from Desulfitobacterium hafniense (strain DSM 10664 / DCB-2).